Here is a 637-residue protein sequence, read N- to C-terminus: DEAD-box ATP-dependent RNA helicase 37 (637 aa).

2 disordered regions span residues Met1–Ala68 and Gly86–Thr141. Composition is skewed to low complexity over residues Ala10–Asn28 and Gly46–Ala68. Residues Gly104–Trp116 show a composition bias toward gly residues. The Q motif signature appears at Asn174–Arg202. The Helicase ATP-binding domain occupies Ile205–Leu389. Ala218–Thr225 is a binding site for ATP. The DEAD box signature appears at Asp333 to Asp336. One can recognise a Helicase C-terminal domain in the interval Tyr416–Ser567. Residues Ser570–Gly610 are disordered. A compositionally biased stretch (basic and acidic residues) spans Gly588 to Arg597. A compositionally biased stretch (gly residues) spans Gly598–Gly610.

Belongs to the DEAD box helicase family. DDX3/DED1 subfamily.

The catalysed reaction is ATP + H2O = ADP + phosphate + H(+). This is DEAD-box ATP-dependent RNA helicase 37 (PL10A) from Oryza sativa subsp. japonica (Rice).